A 260-amino-acid polypeptide reads, in one-letter code: Neuraminyllactose-binding hemagglutinin (260 aa).

The signal sequence occupies residues 1 to 27 (MKANNHFKDFAWKKCLLGASVVALLVG). C28 is lipidated: N-palmitoyl cysteine. C28 is lipidated: S-diacylglycerol cysteine.

It localises to the cell outer membrane. In Helicobacter pylori (strain ATCC 700392 / 26695) (Campylobacter pylori), this protein is Neuraminyllactose-binding hemagglutinin (hpaA).